We begin with the raw amino-acid sequence, 1012 residues long: DNA polymerase gamma (1012 aa).

Belongs to the DNA polymerase type-A family. It depends on Mg(2+) as a cofactor.

The protein localises to the mitochondrion. It catalyses the reaction DNA(n) + a 2'-deoxyribonucleoside 5'-triphosphate = DNA(n+1) + diphosphate. In terms of biological role, involved in the replication of mitochondrial DNA. The chain is DNA polymerase gamma (MIP1) from Komagataella pastoris (Yeast).